The sequence spans 193 residues: uncharacterized protein (193 aa).

The N-terminal stretch at 1–22 (MAVQKNVIKGILAGTFALMLSG) is a signal peptide. The N-palmitoyl cysteine moiety is linked to residue C23. Residue C23 is the site of S-diacylglycerol cysteine attachment.

The protein resides in the cell membrane. This is an uncharacterized protein from Escherichia coli (strain K12).